A 148-amino-acid polypeptide reads, in one-letter code: Large ribosomal subunit protein uL13 (148 aa).

It belongs to the universal ribosomal protein uL13 family. As to quaternary structure, part of the 50S ribosomal subunit.

Its function is as follows. This protein is one of the early assembly proteins of the 50S ribosomal subunit, although it is not seen to bind rRNA by itself. It is important during the early stages of 50S assembly. The sequence is that of Large ribosomal subunit protein uL13 from Lacticaseibacillus casei (strain BL23) (Lactobacillus casei).